Here is a 218-residue protein sequence, read N- to C-terminus: Small ribosomal subunit protein uS3 (218 aa).

In terms of domain architecture, KH type-2 spans Ile-38–Lys-106.

Belongs to the universal ribosomal protein uS3 family. As to quaternary structure, part of the 30S ribosomal subunit. Forms a tight complex with proteins S10 and S14.

Its function is as follows. Binds the lower part of the 30S subunit head. Binds mRNA in the 70S ribosome, positioning it for translation. The chain is Small ribosomal subunit protein uS3 from Geobacillus kaustophilus (strain HTA426).